The primary structure comprises 138 residues: SMVLGYWDIRRMLLEFTDTSYEEKRYICGEAPDYDRSQWLDVKFKLDLDFPNLPYLMDGKNKITQSNAILRIRVDIMENQIMDFRQFSLFLGKKLTFVDFLTYDVLDQNRMFEPKCLDEFPNLKAFMCRCFKMPINNK.

S1 carries the post-translational modification Phosphoserine. The GST N-terminal domain maps to 1–71 (SMVLGYWDIR…KITQSNAILR (71 aa)). Glutathione-binding positions include 6–7 (YW), 39–43 (WLDVK), 52–53 (NL), and 65–66 (QS). In terms of domain architecture, GST C-terminal spans 72–135 (IRVDIMENQI…FMCRCFKMPI (64 aa)).

It belongs to the GST superfamily. Mu family. Homodimer.

Its subcellular location is the cytoplasm. It carries out the reaction RX + glutathione = an S-substituted glutathione + a halide anion + H(+). Functionally, conjugation of reduced glutathione to a wide number of exogenous and endogenous hydrophobic electrophiles. The sequence is that of Glutathione S-transferase Mu 5 from Mesocricetus auratus (Golden hamster).